We begin with the raw amino-acid sequence, 457 residues long: MQTIDFEKFSQYSKPGPRYTSYPTAVEFNENFNEESLKTAFFNHDNLKNPMPLSLYTHLPFCRSACYFCACSVIYTSLEEKKIRYISYLKKELALLKNAMDTNREVAQFHYGGGTPTFFSPIQLDEITQSIQEVFPNFSKDIEMSCEIDPRHFTKEHMQTLFDRGFNRLSFGVQDFDFEVQKAIHRIQPFEMVQESVKLARDYGIKSINFDLIYGLPNQTKEGFLKTLEWVLKLDPDRLAVFNYAHVPWVKKTMRKIDETLLPSLRDKLEILESLISFLEKANYQMIGMDHFAKSDNELYLALQKAELRRNFQGYTTKKFTQTIGIGVTSIGEGGDYYTQNYKDLHHYEKALDLGHLPVERGVALSQEDVLRKEVIMQMMSNLKLDYSKIEEKFSVDFKAHFKKELEKLKPYEEAGLLSFNSKGFEMTKTGGMLVRNMAMEFDAYLRGGEKHFSKTL.

Residues 47-279 (LKNPMPLSLY…EILESLISFL (233 aa)) enclose the Radical SAM core domain. Position 56 (Tyr-56) interacts with S-adenosyl-L-methionine. [4Fe-4S] cluster-binding residues include Cys-62 and Cys-66. Phe-68 is a binding site for S-adenosyl-L-methionine. Cys-69 is a [4Fe-4S] cluster binding site. S-adenosyl-L-methionine is bound by residues Gly-113, 114–115 (GT), Glu-147, Gln-174, Arg-186, Asp-211, Ala-245, and Ile-331.

It belongs to the anaerobic coproporphyrinogen-III oxidase family. Monomer. It depends on [4Fe-4S] cluster as a cofactor.

The protein localises to the cytoplasm. The enzyme catalyses coproporphyrinogen III + 2 S-adenosyl-L-methionine = protoporphyrinogen IX + 2 5'-deoxyadenosine + 2 L-methionine + 2 CO2. Its pathway is porphyrin-containing compound metabolism; protoporphyrin-IX biosynthesis; protoporphyrinogen-IX from coproporphyrinogen-III (AdoMet route): step 1/1. Its function is as follows. Involved in the heme biosynthesis. Catalyzes the anaerobic oxidative decarboxylation of propionate groups of rings A and B of coproporphyrinogen III to yield the vinyl groups in protoporphyrinogen IX. This is Oxygen-independent coproporphyrinogen III oxidase (hemN) from Helicobacter pylori (strain ATCC 700392 / 26695) (Campylobacter pylori).